A 413-amino-acid chain; its full sequence is Gamma-glutamyl phosphate reductase (413 aa).

It belongs to the gamma-glutamyl phosphate reductase family.

It localises to the cytoplasm. It carries out the reaction L-glutamate 5-semialdehyde + phosphate + NADP(+) = L-glutamyl 5-phosphate + NADPH + H(+). Its pathway is amino-acid biosynthesis; L-proline biosynthesis; L-glutamate 5-semialdehyde from L-glutamate: step 2/2. Functionally, catalyzes the NADPH-dependent reduction of L-glutamate 5-phosphate into L-glutamate 5-semialdehyde and phosphate. The product spontaneously undergoes cyclization to form 1-pyrroline-5-carboxylate. This is Gamma-glutamyl phosphate reductase from Anoxybacillus flavithermus (strain DSM 21510 / WK1).